The following is a 147-amino-acid chain: Protein PBDC1 homolog (147 aa).

This sequence belongs to the PBDC1 family.

The protein localises to the cytoplasm. It is found in the nucleus. This Schizosaccharomyces pombe (strain 972 / ATCC 24843) (Fission yeast) protein is Protein PBDC1 homolog.